A 146-amino-acid polypeptide reads, in one-letter code: 3-hydroxyacyl-[acyl-carrier-protein] dehydratase FabZ (146 aa).

Histidine 49 is an active-site residue.

Belongs to the thioester dehydratase family. FabZ subfamily.

It localises to the cytoplasm. It catalyses the reaction a (3R)-hydroxyacyl-[ACP] = a (2E)-enoyl-[ACP] + H2O. In terms of biological role, involved in unsaturated fatty acids biosynthesis. Catalyzes the dehydration of short chain beta-hydroxyacyl-ACPs and long chain saturated and unsaturated beta-hydroxyacyl-ACPs. The sequence is that of 3-hydroxyacyl-[acyl-carrier-protein] dehydratase FabZ from Pseudomonas savastanoi pv. phaseolicola (strain 1448A / Race 6) (Pseudomonas syringae pv. phaseolicola (strain 1448A / Race 6)).